Here is a 396-residue protein sequence, read N- to C-terminus: MAKKVVTDLDLKDKKVLVRVDFNVPMKDGKITNDNRIVAALPTIEYILEQNGKAILFSHLGKVKTEEDKEGKSLRPVAARLSELLGKEVKFVPTTRGPELEKAIDELKDGEVLLFENTRFEDIDGKKESKNDPELGKYWASLGDVFVNDAFGTAHRAHASNVGIASNLESAAGFLMEKEIKFIGGVVDNPARPLVAILGGAKVSDKIGVIENLLTKADKVLVGGGMTFTFMAAQGQEIGKSLLEADKVELAKGLLEKAGDKLVLPVDAVVSKEFSNDAPFHTVSADSIPADEMGLDIGQATIDLFTKELQGAKTVVWNGPMGVFELSNFAKGTIGVCEAIANLTDATTIIGGGDSAAAAMDLGFADKFTHISTGGGASLEYLEGKELPGVASISDK.

Substrate is bound by residues 21–23, R36, 59–62, R119, and R156; these read DFN and HLGK. ATP is bound by residues K206, G294, E325, and 352–355; that span reads GGDS.

This sequence belongs to the phosphoglycerate kinase family. Monomer.

It localises to the cytoplasm. The catalysed reaction is (2R)-3-phosphoglycerate + ATP = (2R)-3-phospho-glyceroyl phosphate + ADP. It functions in the pathway carbohydrate degradation; glycolysis; pyruvate from D-glyceraldehyde 3-phosphate: step 2/5. This chain is Phosphoglycerate kinase, found in Listeria monocytogenes serotype 4a (strain HCC23).